The chain runs to 344 residues: Aurora kinase B (344 aa).

Residue T35 is modified to Phosphothreonine. S62 bears the Phosphoserine mark. Phosphothreonine is present on T64. The Protein kinase domain maps to 77 to 327 (FEIGRPLGKG…LAQVSAHPWV (251 aa)). ATP-binding positions include 83–91 (LGKGKFGNV) and K106. D200 (proton acceptor) is an active-site residue. At K215 the chain carries N6-acetyllysine. S227 is subject to Phosphoserine. T232 bears the Phosphothreonine; by autocatalysis mark.

It belongs to the protein kinase superfamily. Ser/Thr protein kinase family. Aurora subfamily. In terms of assembly, component of the chromosomal passenger complex (CPC) composed of at least BIRC5/survivin, CDCA8/borealin, INCENP, AURKB or AURKC; predominantly independent AURKB- and AURKC-containing complexes exist. Associates with RACGAP1 during M phase. Interacts with SPDYC; this interaction may be required for proper localization of active, Thr-232-phosphorylated AURKB form during prometaphase and metaphase. Interacts with p53/TP53. Interacts (via the middle kinase domain) with NOC2L (via the N- and C-terminus domains). Interacts with CDCA1. Interacts with EVI5. Interacts with JTB. Interacts with NDC80. Interacts with PSMA3. Interacts with RNF2/RING1B. Interacts with SEPTIN1. Interacts with SIRT2. Interacts with TACC1. Interacts with TTC28. The phosphorylation of Thr-232 requires the binding to INCENP and occurs by means of an autophosphorylation mechanism. Thr-232 phosphorylation is indispensable for the AURKB kinase activity. Post-translationally, acetylated at Lys-215 by KAT5 at kinetochores, increasing AURKB activity and promoting accurate chromosome segregation in mitosis. In terms of processing, ubiquitinated by different BCR (BTB-CUL3-RBX1) E3 ubiquitin ligase complexes. Ubiquitinated by the BCR(KLHL9-KLHL13) E3 ubiquitin ligase complex, ubiquitination leads to removal from mitotic chromosomes and is required for cytokinesis. During anaphase, the BCR(KLHL21) E3 ubiquitin ligase complex recruits the CPC complex from chromosomes to the spindle midzone and mediates the ubiquitination of AURKB. Ubiquitination of AURKB by BCR(KLHL21) E3 ubiquitin ligase complex may not lead to its degradation by the proteasome. Deubiquitinated by USP35; inhibiting CDH1-mediated degradation of AURKB.

The protein localises to the nucleus. It localises to the chromosome. Its subcellular location is the centromere. It is found in the kinetochore. The protein resides in the cytoplasm. The protein localises to the cytoskeleton. It localises to the spindle. Its subcellular location is the midbody. It catalyses the reaction L-seryl-[protein] + ATP = O-phospho-L-seryl-[protein] + ADP + H(+). The catalysed reaction is L-threonyl-[protein] + ATP = O-phospho-L-threonyl-[protein] + ADP + H(+). Activity is greatly increased when AURKB is within the CPC complex. In particular, AURKB-phosphorylated INCENP acts as an activator of AURKB. Positive feedback between HASPIN and AURKB contributes to CPC localization. Its function is as follows. Serine/threonine-protein kinase component of the chromosomal passenger complex (CPC), a complex that acts as a key regulator of mitosis. The CPC complex has essential functions at the centromere in ensuring correct chromosome alignment and segregation and is required for chromatin-induced microtubule stabilization and spindle assembly. Involved in the bipolar attachment of spindle microtubules to kinetochores and is a key regulator for the onset of cytokinesis during mitosis. Required for central/midzone spindle assembly and cleavage furrow formation. Key component of the cytokinesis checkpoint, a process required to delay abscission to prevent both premature resolution of intercellular chromosome bridges and accumulation of DNA damage: phosphorylates CHMP4C, leading to retain abscission-competent VPS4 (VPS4A and/or VPS4B) at the midbody ring until abscission checkpoint signaling is terminated at late cytokinesis. AURKB phosphorylates the CPC complex subunits BIRC5/survivin, CDCA8/borealin and INCENP. Phosphorylation of INCENP leads to increased AURKB activity. Other known AURKB substrates involved in centromeric functions and mitosis are CENPA, DES/desmin, GPAF, KIF2C, NSUN2, RACGAP1, SEPTIN1, VIM/vimentin, HASPIN, and histone H3. A positive feedback loop involving HASPIN and AURKB contributes to localization of CPC to centromeres. Phosphorylation of VIM controls vimentin filament segregation in cytokinetic process, whereas histone H3 is phosphorylated at 'Ser-10' and 'Ser-28' during mitosis (H3S10ph and H3S28ph, respectively). AURKB is also required for kinetochore localization of BUB1 and SGO1. Phosphorylation of p53/TP53 negatively regulates its transcriptional activity. Key regulator of active promoters in resting B- and T-lymphocytes: acts by mediating phosphorylation of H3S28ph at active promoters in resting B-cells, inhibiting RNF2/RING1B-mediated ubiquitination of histone H2A and enhancing binding and activity of the USP16 deubiquitinase at transcribed genes. Acts as an inhibitor of CGAS during mitosis: catalyzes phosphorylation of the N-terminus of CGAS during the G2-M transition, blocking CGAS liquid phase separation and activation, and thereby preventing CGAS-induced autoimmunity. Phosphorylates KRT5 during anaphase and telophase. Phosphorylates ATXN10 which promotes phosphorylation of ATXN10 by PLK1 and may play a role in the regulation of cytokinesis and stimulating the proteasomal degradation of ATXN10. This chain is Aurora kinase B (AURKB), found in Sus scrofa (Pig).